The sequence spans 263 residues: Small ribosomal subunit protein eS4 (263 aa).

An S4 RNA-binding domain is found at 42-104; that stretch reads LPLIIFLRNR…TGEHFRLVYD (63 aa).

This sequence belongs to the eukaryotic ribosomal protein eS4 family.

The sequence is that of Small ribosomal subunit protein eS4 (RPS4) from Gallus gallus (Chicken).